Here is a 232-residue protein sequence, read N- to C-terminus: MIPTSFPPREEIARLTARMLLEIEAVHFRPQEPFTLASGLPSPTYIDCRKLISYPRIRSTLMDFMAVTLLRDAGFEAFDNIAGGETAGIPFAALVAERLGLPMTYVRKKPKGYGRNARIEGVMTEGQRVLLVEDLTTDGGSKLSFVDAIRETGASCAHTAVIFYYGIFPETIGRLQAHGVTLHHLCTWWDVLAEARASGAFDAGTLAEVESFLSNPRDWQDARKPADPTKSL.

5-phospho-alpha-D-ribose 1-diphosphate is bound by residues Arg-107, Lys-108, Lys-111, and 133-141; that span reads EDLTTDGGS. Residue Thr-137 coordinates orotate.

This sequence belongs to the purine/pyrimidine phosphoribosyltransferase family. PyrE subfamily. In terms of assembly, homodimer. Mg(2+) serves as cofactor.

It catalyses the reaction orotidine 5'-phosphate + diphosphate = orotate + 5-phospho-alpha-D-ribose 1-diphosphate. It participates in pyrimidine metabolism; UMP biosynthesis via de novo pathway; UMP from orotate: step 1/2. Catalyzes the transfer of a ribosyl phosphate group from 5-phosphoribose 1-diphosphate to orotate, leading to the formation of orotidine monophosphate (OMP). The chain is Orotate phosphoribosyltransferase from Cereibacter sphaeroides (strain ATCC 17029 / ATH 2.4.9) (Rhodobacter sphaeroides).